The following is a 170-amino-acid chain: Ribosome maturation factor RimM (170 aa).

The 73-residue stretch at 98 to 170 (PDEYYWVDLE…RIVVDWDPEF (73 aa)) folds into the PRC barrel domain.

It belongs to the RimM family. Binds ribosomal protein uS19.

It is found in the cytoplasm. Functionally, an accessory protein needed during the final step in the assembly of 30S ribosomal subunit, possibly for assembly of the head region. Essential for efficient processing of 16S rRNA. May be needed both before and after RbfA during the maturation of 16S rRNA. It has affinity for free ribosomal 30S subunits but not for 70S ribosomes. The chain is Ribosome maturation factor RimM from Xylella fastidiosa (strain 9a5c).